The following is a 137-amino-acid chain: Putative transcription elongation factor S-II-like protein 055R (137 aa).

The segment at 85 to 136 (DFITCPYEVSEGVLRCGKCDCTKILWFSKQTRSMDEPTTIFASCSNCKTRWT) adopts a TFIIS-type zinc-finger fold. The Zn(2+) site is built by Cys89, Cys103, Cys128, and Cys131.

Belongs to the IIV-6 349L family.

This Aedes vexans (Inland floodwater mosquito) protein is Putative transcription elongation factor S-II-like protein 055R.